A 119-amino-acid polypeptide reads, in one-letter code: Large ribosomal subunit protein uL18 (119 aa).

Residues 1–20 are disordered; the sequence is MSQIDKASRRQKIKDRSRVK. Basic residues predominate over residues 9–20; that stretch reads RRQKIKDRSRVK.

The protein belongs to the universal ribosomal protein uL18 family. Part of the 50S ribosomal subunit; part of the 5S rRNA/L5/L18/L25 subcomplex. Contacts the 5S and 23S rRNAs.

Its function is as follows. This is one of the proteins that bind and probably mediate the attachment of the 5S RNA into the large ribosomal subunit, where it forms part of the central protuberance. This is Large ribosomal subunit protein uL18 from Chlorobium phaeobacteroides (strain DSM 266 / SMG 266 / 2430).